Reading from the N-terminus, the 226-residue chain is Fibronectin type III domain-containing protein 10 (226 aa).

A signal peptide spans 1 to 20; the sequence is MRAPPLLLLLAACAPPPCAA. The Extracellular segment spans residues 21–182; that stretch reads AAPTPPGWEP…FTAEPAGMQD (162 aa). The Fibronectin type-III domain occupies 74–166; sequence PAGRSLRASV…PAAAAPETPE (93 aa). N-linked (GlcNAc...) asparagine glycans are attached at residues Asn-86 and Asn-109. The helical transmembrane segment at 183–203 threads the bilayer; that stretch reads IVVAMTAVGGSICVMLVVICL. At 204 to 226 the chain is on the cytoplasmic side; it reads LVAYITENLMRPALARPGLRRHP.

The protein localises to the membrane. In Homo sapiens (Human), this protein is Fibronectin type III domain-containing protein 10 (FNDC10).